The following is a 199-amino-acid chain: ATP-dependent Clp protease proteolytic subunit (199 aa).

S97 (nucleophile) is an active-site residue. The active site involves H122.

It belongs to the peptidase S14 family. Fourteen ClpP subunits assemble into 2 heptameric rings which stack back to back to give a disk-like structure with a central cavity, resembling the structure of eukaryotic proteasomes.

It localises to the cytoplasm. It catalyses the reaction Hydrolysis of proteins to small peptides in the presence of ATP and magnesium. alpha-casein is the usual test substrate. In the absence of ATP, only oligopeptides shorter than five residues are hydrolyzed (such as succinyl-Leu-Tyr-|-NHMec, and Leu-Tyr-Leu-|-Tyr-Trp, in which cleavage of the -Tyr-|-Leu- and -Tyr-|-Trp bonds also occurs).. Functionally, cleaves peptides in various proteins in a process that requires ATP hydrolysis. Has a chymotrypsin-like activity. Plays a major role in the degradation of misfolded proteins. The protein is ATP-dependent Clp protease proteolytic subunit of Geobacter sulfurreducens (strain ATCC 51573 / DSM 12127 / PCA).